The primary structure comprises 239 residues: ATP-dependent dethiobiotin synthetase BioD (239 aa).

ATP is bound at residue 15 to 20 (EIGKTF). Mg(2+) is bound at residue T19. K40 is an active-site residue. Residues D57, 118 to 121 (EGVG), and 178 to 179 (NH) each bind ATP. Residues D57 and E118 each coordinate Mg(2+).

It belongs to the dethiobiotin synthetase family. As to quaternary structure, homodimer. Mg(2+) is required as a cofactor.

The protein resides in the cytoplasm. The catalysed reaction is (7R,8S)-7,8-diammoniononanoate + CO2 + ATP = (4R,5S)-dethiobiotin + ADP + phosphate + 3 H(+). It participates in cofactor biosynthesis; biotin biosynthesis; biotin from 7,8-diaminononanoate: step 1/2. Its function is as follows. Catalyzes a mechanistically unusual reaction, the ATP-dependent insertion of CO2 between the N7 and N8 nitrogen atoms of 7,8-diaminopelargonic acid (DAPA, also called 7,8-diammoniononanoate) to form a ureido ring. This chain is ATP-dependent dethiobiotin synthetase BioD, found in Burkholderia multivorans (strain ATCC 17616 / 249).